We begin with the raw amino-acid sequence, 94 residues long: Small ribosomal subunit protein bS18 (94 aa).

Residues 1 to 11 (MANERPTSQQR) show a composition bias toward polar residues. A disordered region spans residues 1–24 (MANERPTSQQRPAGGPRKRRPFQR).

The protein belongs to the bacterial ribosomal protein bS18 family. In terms of assembly, part of the 30S ribosomal subunit. Forms a tight heterodimer with protein bS6.

Its function is as follows. Binds as a heterodimer with protein bS6 to the central domain of the 16S rRNA, where it helps stabilize the platform of the 30S subunit. In Pelobacter propionicus (strain DSM 2379 / NBRC 103807 / OttBd1), this protein is Small ribosomal subunit protein bS18.